The chain runs to 391 residues: Chorismate synthase (391 aa).

An NADP(+)-binding site is contributed by Arg-48. FMN contacts are provided by residues 126–128 (RAS), Gly-286, 301–305 (KPTSS), and Arg-328.

Belongs to the chorismate synthase family. Requires FMNH2 as cofactor.

The enzyme catalyses 5-O-(1-carboxyvinyl)-3-phosphoshikimate = chorismate + phosphate. The protein operates within metabolic intermediate biosynthesis; chorismate biosynthesis; chorismate from D-erythrose 4-phosphate and phosphoenolpyruvate: step 7/7. Catalyzes the anti-1,4-elimination of the C-3 phosphate and the C-6 proR hydrogen from 5-enolpyruvylshikimate-3-phosphate (EPSP) to yield chorismate, which is the branch point compound that serves as the starting substrate for the three terminal pathways of aromatic amino acid biosynthesis. This reaction introduces a second double bond into the aromatic ring system. In Saccharolobus islandicus (strain L.S.2.15 / Lassen #1) (Sulfolobus islandicus), this protein is Chorismate synthase.